A 157-amino-acid chain; its full sequence is 2-C-methyl-D-erythritol 2,4-cyclodiphosphate synthase (157 aa).

Residues Asp-8 and His-10 each contribute to the a divalent metal cation site. 4-CDP-2-C-methyl-D-erythritol 2-phosphate-binding positions include 8 to 10 (DVH) and 34 to 35 (HS). His-42 serves as a coordination point for a divalent metal cation. Residues 56–58 (DIG), 61–65 (FPDTD), 100–106 (AQAPKMA), 132–135 (TTTE), Phe-139, and Arg-142 contribute to the 4-CDP-2-C-methyl-D-erythritol 2-phosphate site.

It belongs to the IspF family. As to quaternary structure, homotrimer. A divalent metal cation is required as a cofactor.

The enzyme catalyses 4-CDP-2-C-methyl-D-erythritol 2-phosphate = 2-C-methyl-D-erythritol 2,4-cyclic diphosphate + CMP. It functions in the pathway isoprenoid biosynthesis; isopentenyl diphosphate biosynthesis via DXP pathway; isopentenyl diphosphate from 1-deoxy-D-xylulose 5-phosphate: step 4/6. In terms of biological role, involved in the biosynthesis of isopentenyl diphosphate (IPP) and dimethylallyl diphosphate (DMAPP), two major building blocks of isoprenoid compounds. Catalyzes the conversion of 4-diphosphocytidyl-2-C-methyl-D-erythritol 2-phosphate (CDP-ME2P) to 2-C-methyl-D-erythritol 2,4-cyclodiphosphate (ME-CPP) with a corresponding release of cytidine 5-monophosphate (CMP). The sequence is that of 2-C-methyl-D-erythritol 2,4-cyclodiphosphate synthase from Pseudomonas fluorescens (strain SBW25).